We begin with the raw amino-acid sequence, 30 residues long: NVDFNSESTRRKKKQNEIVDLHNSLRRTVN.

A disordered region spans residues 1–30 (NVDFNSESTRRKKKQNEIVDLHNSLRRTVN).

It belongs to the CRISP family. Contains 8 disulfide bonds. Expressed by the venom gland.

The protein resides in the secreted. Its function is as follows. Inhibits calcium-activated potassium channels (KCa), voltage-gated potassium channel (Kv), and the calcium release channel/ryanodine receptor (RyR). This is Cysteine-rich venom protein mossambin from Naja mossambica (Mozambique spitting cobra).